The chain runs to 157 residues: MICSTLLAVEAAEKNGLFDLDATLPIIAVQFLLLVAVLNSLFYEPVTRVIDSRNDYIRTTQAEAQERLDKAMALTRQYEAEIGQARLQAQQVIAEAEAAAARIRSEKLAAAQAEIQAKLEAARRQIEQEKQTALEQLQQQVDAIAAQITEKLLGSAR.

Residues 22–42 form a helical membrane-spanning segment; the sequence is ATLPIIAVQFLLLVAVLNSLF.

Belongs to the ATPase B chain family. F-type ATPases have 2 components, F(1) - the catalytic core - and F(0) - the membrane proton channel. F(1) has five subunits: alpha(3), beta(3), gamma(1), delta(1), epsilon(1). F(0) has four main subunits: a(1), b(1), b'(1) and c(10-14). The alpha and beta chains form an alternating ring which encloses part of the gamma chain. F(1) is attached to F(0) by a central stalk formed by the gamma and epsilon chains, while a peripheral stalk is formed by the delta, b and b' chains.

It is found in the cellular thylakoid membrane. F(1)F(0) ATP synthase produces ATP from ADP in the presence of a proton or sodium gradient. F-type ATPases consist of two structural domains, F(1) containing the extramembraneous catalytic core and F(0) containing the membrane proton channel, linked together by a central stalk and a peripheral stalk. During catalysis, ATP synthesis in the catalytic domain of F(1) is coupled via a rotary mechanism of the central stalk subunits to proton translocation. Its function is as follows. Component of the F(0) channel, it forms part of the peripheral stalk, linking F(1) to F(0). The b'-subunit is a diverged and duplicated form of b found in plants and photosynthetic bacteria. The polypeptide is ATP synthase subunit b' (Synechococcus sp. (strain JA-3-3Ab) (Cyanobacteria bacterium Yellowstone A-Prime)).